Consider the following 434-residue polypeptide: Serine hydroxymethyltransferase (434 aa).

(6S)-5,6,7,8-tetrahydrofolate contacts are provided by residues leucine 133 and glycine 137–leucine 139. Lysine 242 bears the N6-(pyridoxal phosphate)lysine mark.

This sequence belongs to the SHMT family. Homodimer. Pyridoxal 5'-phosphate serves as cofactor.

The protein localises to the cytoplasm. The catalysed reaction is (6R)-5,10-methylene-5,6,7,8-tetrahydrofolate + glycine + H2O = (6S)-5,6,7,8-tetrahydrofolate + L-serine. It functions in the pathway one-carbon metabolism; tetrahydrofolate interconversion. The protein operates within amino-acid biosynthesis; glycine biosynthesis; glycine from L-serine: step 1/1. In terms of biological role, catalyzes the reversible interconversion of serine and glycine with tetrahydrofolate (THF) serving as the one-carbon carrier. This reaction serves as the major source of one-carbon groups required for the biosynthesis of purines, thymidylate, methionine, and other important biomolecules. Also exhibits THF-independent aldolase activity toward beta-hydroxyamino acids, producing glycine and aldehydes, via a retro-aldol mechanism. This is Serine hydroxymethyltransferase from Caulobacter sp. (strain K31).